The sequence spans 264 residues: Thymidylate synthase (264 aa).

A dUMP-binding site is contributed by Arg-21. Residue His-51 coordinates (6R)-5,10-methylene-5,6,7,8-tetrahydrofolate. 126-127 serves as a coordination point for dUMP; it reads RR. Cys-146 serves as the catalytic Nucleophile. DUMP is bound by residues 166 to 169, Asn-177, and 207 to 209; these read RSAD and HLY. A (6R)-5,10-methylene-5,6,7,8-tetrahydrofolate-binding site is contributed by Asp-169. Ala-263 is a (6R)-5,10-methylene-5,6,7,8-tetrahydrofolate binding site.

This sequence belongs to the thymidylate synthase family. Bacterial-type ThyA subfamily. Homodimer.

Its subcellular location is the cytoplasm. It catalyses the reaction dUMP + (6R)-5,10-methylene-5,6,7,8-tetrahydrofolate = 7,8-dihydrofolate + dTMP. It participates in pyrimidine metabolism; dTTP biosynthesis. In terms of biological role, catalyzes the reductive methylation of 2'-deoxyuridine-5'-monophosphate (dUMP) to 2'-deoxythymidine-5'-monophosphate (dTMP) while utilizing 5,10-methylenetetrahydrofolate (mTHF) as the methyl donor and reductant in the reaction, yielding dihydrofolate (DHF) as a by-product. This enzymatic reaction provides an intracellular de novo source of dTMP, an essential precursor for DNA biosynthesis. The protein is Thymidylate synthase of Thiobacillus denitrificans (strain ATCC 25259 / T1).